The chain runs to 283 residues: Vitamin K epoxide reductase homolog (283 aa).

At 1–20 (MASYLKLKAQEETWLQRHSR) the chain is on the cytoplasmic side. A helical membrane pass occupies residues 21–41 (LILAILAGLGSLLTAYLTYTK). At 42–66 (LTEQPAAFCTGDGGCDLVLSSRWAE) the chain is on the periplasmic side. C50 and C56 form a disulfide bridge. 59–65 (VLSSRWA) is a binding site for a quinone. Residues 67–87 (FLGIPTAAVGLLGFLGVLALA) form a helical membrane-spanning segment. Over 88-102 (VLPDGLPLVKRWRWP) the chain is Cytoplasmic. Residues 103-123 (ALFGLVSAMTAFEMYMLYLMV) form a helical membrane-spanning segment. 111–122 (MTAFEMYMLYLM) is an a quinone binding site. Residues 124–128 (AVLRQ) lie on the Periplasmic side of the membrane. The chain crosses the membrane as a helical span at residues 129 to 149 (FCMYCTTAIILVAGLGLVTVL). C130 and C133 are joined by a disulfide. The Cytoplasmic segment spans residues 150 to 158 (GHRWLDGGK). A helical transmembrane segment spans residues 159–179 (LAFSYILVAFLTLVTTIGVYA). The Periplasmic portion of the chain corresponds to 180 to 283 (NQVPPPSPLA…ASGYPLEEGR (104 aa)). The interval 186–283 (SPLAVGLAAH…ASGYPLEEGR (98 aa)) is thioredoxin-like domain. 2 cysteine pairs are disulfide-bonded: C209–C212 and C231–C244.

This sequence belongs to the VKOR family.

It is found in the membrane. Its activity is regulated as follows. Inhibited by ferulenol. Thiol-disulfide oxidoreductase that catalyzes vitamin K-dependent disulfide bond formation in periplasmic target proteins. This chain is Vitamin K epoxide reductase homolog, found in Synechococcus sp. (strain JA-2-3B'a(2-13)) (Cyanobacteria bacterium Yellowstone B-Prime).